The sequence spans 508 residues: MKSLTLIPGQLSLSQLRDIYSHPVNITLDSGAFAAIDESVACVNAILAEGRTAYGINTGFGLLAQTRISTEDLENLQRSLVLSHAAGVGEPLDDDLARLIMVLKINSLSRGFSGIRLSVIQALIGLVNAGVTPWIPAKGSVGASGDLAPLAHMSLTLLGEGKARVRGGDWLPATEALRQVGLEPITLAAKEGLALLNGTQASTAFALRGLFEAEDLFASAVVCGALTTEAALGSRRPFDARIHEVRGQRGQIDAAALYRHLLTDDSAISQSHHNCSKVQDPYSLRCQPQVMGACLTQIRQAAEVLLAEANAVSDNPLVFAAENDVISGGNFHAEPVAMAADNIALAIAEIGSLSERRIALMMDSHMSQLPPFLVKNGGVNSGFMIAQVTAAALASENKALSHPHSVDSLPTSANQEDHVSMAPAAGRRLWAMAENTRGVLAVEWLAAAQGLDMREGLTTSPLLEEARHLLRERVPHYTQDRYFAPDIDNAIALLAARHLTRLLPAVLH.

The segment at residues 143 to 145 is a cross-link (5-imidazolinone (Ala-Gly)); that stretch reads ASG. Ser144 is subject to 2,3-didehydroalanine (Ser).

This sequence belongs to the PAL/histidase family. In terms of processing, contains an active site 4-methylidene-imidazol-5-one (MIO), which is formed autocatalytically by cyclization and dehydration of residues Ala-Ser-Gly.

Its subcellular location is the cytoplasm. It catalyses the reaction L-histidine = trans-urocanate + NH4(+). It functions in the pathway amino-acid degradation; L-histidine degradation into L-glutamate; N-formimidoyl-L-glutamate from L-histidine: step 1/3. In Klebsiella pneumoniae subsp. pneumoniae (strain ATCC 700721 / MGH 78578), this protein is Histidine ammonia-lyase.